Reading from the N-terminus, the 260-residue chain is Ribosomal RNA small subunit methyltransferase J (260 aa).

S-adenosyl-L-methionine contacts are provided by residues 125-126 (ER) and Asp-179.

It belongs to the methyltransferase superfamily. RsmJ family.

The protein localises to the cytoplasm. The catalysed reaction is guanosine(1516) in 16S rRNA + S-adenosyl-L-methionine = N(2)-methylguanosine(1516) in 16S rRNA + S-adenosyl-L-homocysteine + H(+). In terms of biological role, specifically methylates the guanosine in position 1516 of 16S rRNA. In Pseudomonas entomophila (strain L48), this protein is Ribosomal RNA small subunit methyltransferase J.